The following is a 521-amino-acid chain: Type-2 serine--tRNA ligase (521 aa).

Residue A316 coordinates L-serine. C318 serves as a coordination point for Zn(2+). R347 serves as a coordination point for L-serine. ATP contacts are provided by residues 347 to 349 (RWE) and 358 to 359 (RV). 364–366 (RVE) serves as a coordination point for L-serine. Zn(2+) is bound by residues E366 and C473. R480 provides a ligand contact to ATP.

The protein belongs to the class-II aminoacyl-tRNA synthetase family. Type-2 seryl-tRNA synthetase subfamily. As to quaternary structure, homodimer. It depends on Zn(2+) as a cofactor.

It is found in the cytoplasm. The enzyme catalyses tRNA(Ser) + L-serine + ATP = L-seryl-tRNA(Ser) + AMP + diphosphate + H(+). It carries out the reaction tRNA(Sec) + L-serine + ATP = L-seryl-tRNA(Sec) + AMP + diphosphate + H(+). Its pathway is aminoacyl-tRNA biosynthesis; selenocysteinyl-tRNA(Sec) biosynthesis; L-seryl-tRNA(Sec) from L-serine and tRNA(Sec): step 1/1. In terms of biological role, catalyzes the attachment of serine to tRNA(Ser). Is also able to aminoacylate tRNA(Sec) with serine, to form the misacylated tRNA L-seryl-tRNA(Sec), which will be further converted into selenocysteinyl-tRNA(Sec). The chain is Type-2 serine--tRNA ligase (serS) from Methanocaldococcus jannaschii (strain ATCC 43067 / DSM 2661 / JAL-1 / JCM 10045 / NBRC 100440) (Methanococcus jannaschii).